The chain runs to 237 residues: Ribosomal RNA small subunit methyltransferase G (237 aa).

S-adenosyl-L-methionine contacts are provided by residues glycine 78, phenylalanine 83, 129 to 130, and arginine 148; that span reads AE.

It belongs to the methyltransferase superfamily. RNA methyltransferase RsmG family.

It is found in the cytoplasm. Specifically methylates the N7 position of a guanine in 16S rRNA. The protein is Ribosomal RNA small subunit methyltransferase G of Streptococcus pyogenes serotype M2 (strain MGAS10270).